Reading from the N-terminus, the 166-residue chain is AP-3 complex subunit sigma (166 aa).

This sequence belongs to the adaptor complexes small subunit family. As to quaternary structure, adaptor protein complex 3 (AP-3) is a heterotetramer composed of two large adaptins (delta-type subunit and beta-type subunit), a medium adaptin (mu-type subunit) and a small adaptin (sigma-type subunit).

It localises to the cytoplasm. Its subcellular location is the golgi apparatus. The protein localises to the cytoplasmic vesicle membrane. Part of the AP-3 complex, an adaptor-related complex which seems to be clathrin-associated. The complex is associated with the Golgi region as well as more peripheral structures. It facilitates the budding of vesicles from the Golgi membrane and may be directly involved in trafficking to the vacuole. It also function in maintaining the identity of lytic vacuoles and in regulating the transition between storage and lytic vacuoles. This chain is AP-3 complex subunit sigma, found in Arabidopsis thaliana (Mouse-ear cress).